The chain runs to 287 residues: Bifunctional protein FolD (287 aa).

NADP(+)-binding positions include 165–167 (GRG), Thr192, and Val233.

The protein belongs to the tetrahydrofolate dehydrogenase/cyclohydrolase family. Homodimer.

It catalyses the reaction (6R)-5,10-methylene-5,6,7,8-tetrahydrofolate + NADP(+) = (6R)-5,10-methenyltetrahydrofolate + NADPH. The enzyme catalyses (6R)-5,10-methenyltetrahydrofolate + H2O = (6R)-10-formyltetrahydrofolate + H(+). It functions in the pathway one-carbon metabolism; tetrahydrofolate interconversion. Its function is as follows. Catalyzes the oxidation of 5,10-methylenetetrahydrofolate to 5,10-methenyltetrahydrofolate and then the hydrolysis of 5,10-methenyltetrahydrofolate to 10-formyltetrahydrofolate. The sequence is that of Bifunctional protein FolD from Cutibacterium acnes (strain DSM 16379 / KPA171202) (Propionibacterium acnes).